A 557-amino-acid polypeptide reads, in one-letter code: Dihydroxy-acid dehydratase (557 aa).

Cysteine 50 contributes to the [2Fe-2S] cluster binding site. Aspartate 82 lines the Mg(2+) pocket. [2Fe-2S] cluster is bound at residue cysteine 123. 2 residues coordinate Mg(2+): aspartate 124 and lysine 125. Residue lysine 125 is modified to N6-carboxylysine. Residue cysteine 195 coordinates [2Fe-2S] cluster. Glutamate 447 serves as a coordination point for Mg(2+). Serine 473 (proton acceptor) is an active-site residue.

Belongs to the IlvD/Edd family. As to quaternary structure, homodimer. [2Fe-2S] cluster serves as cofactor. Mg(2+) is required as a cofactor.

The catalysed reaction is (2R)-2,3-dihydroxy-3-methylbutanoate = 3-methyl-2-oxobutanoate + H2O. The enzyme catalyses (2R,3R)-2,3-dihydroxy-3-methylpentanoate = (S)-3-methyl-2-oxopentanoate + H2O. The protein operates within amino-acid biosynthesis; L-isoleucine biosynthesis; L-isoleucine from 2-oxobutanoate: step 3/4. It functions in the pathway amino-acid biosynthesis; L-valine biosynthesis; L-valine from pyruvate: step 3/4. Its function is as follows. Functions in the biosynthesis of branched-chain amino acids. Catalyzes the dehydration of (2R,3R)-2,3-dihydroxy-3-methylpentanoate (2,3-dihydroxy-3-methylvalerate) into 2-oxo-3-methylpentanoate (2-oxo-3-methylvalerate) and of (2R)-2,3-dihydroxy-3-methylbutanoate (2,3-dihydroxyisovalerate) into 2-oxo-3-methylbutanoate (2-oxoisovalerate), the penultimate precursor to L-isoleucine and L-valine, respectively. In Burkholderia pseudomallei (strain 1710b), this protein is Dihydroxy-acid dehydratase.